A 293-amino-acid polypeptide reads, in one-letter code: Homoserine kinase (293 aa).

84–94 (PISRGLGSSSA) lines the ATP pocket.

It belongs to the GHMP kinase family. Homoserine kinase subfamily.

It is found in the cytoplasm. It catalyses the reaction L-homoserine + ATP = O-phospho-L-homoserine + ADP + H(+). The protein operates within amino-acid biosynthesis; L-threonine biosynthesis; L-threonine from L-aspartate: step 4/5. Catalyzes the ATP-dependent phosphorylation of L-homoserine to L-homoserine phosphate. This is Homoserine kinase from Wolinella succinogenes (strain ATCC 29543 / DSM 1740 / CCUG 13145 / JCM 31913 / LMG 7466 / NCTC 11488 / FDC 602W) (Vibrio succinogenes).